Reading from the N-terminus, the 347-residue chain is MSFVLSRMAACGGSCKNKVTVSKPVWDFLSKETPARLARLREEHRVSILIDGETSDIYVLQLSPQGPPPAPPNGLYLARKALKGLLKEAEKELKKAQRQGELMGCLALGGGGEHPELHRPGPPPLRAAPLLPPGARGLPPPPPPLPPPLPPRLREDAEEQETTCPICLGEIQNAKTLEKCRHSFCEGCITRALQVKKACPMCGRFYGQLVGNQPQNGRMLVSKDATLLLPSYEKYGTIVIQYVFPPGVQGAEHPNPGVRYPGTTRVAYLPDCPEGNKVLTLFRKAFDQRLTFTIGTSMTTGRPNVITWNDIHHKTSCTGGPQLFGYPDPTYLTRVQEELRAKGITDD.

The interval G111–A157 is disordered. Pro residues predominate over residues P120–P151. The RING-type zinc finger occupies C164–F205.

This sequence belongs to the Deltex family. As to quaternary structure, homodimer. May form a heterodimer with other members of the Deltex family. Interacts with NOTCH1. As to expression, strongly expressed in testis and brain. Weakly expressed in kidney.

It localises to the cytoplasm. The enzyme catalyses S-ubiquitinyl-[E2 ubiquitin-conjugating enzyme]-L-cysteine + [acceptor protein]-L-lysine = [E2 ubiquitin-conjugating enzyme]-L-cysteine + N(6)-ubiquitinyl-[acceptor protein]-L-lysine.. The protein operates within protein modification; protein ubiquitination. Functionally, regulator of Notch signaling, a signaling pathway involved in cell-cell communications that regulates a broad spectrum of cell-fate determinations. Probably acts both as a positive and negative regulator of Notch, depending on the developmental and cell context. Functions as a ubiquitin ligase protein in vitro, suggesting that it may regulate the Notch pathway via some ubiquitin ligase activity. The polypeptide is Probable E3 ubiquitin-protein ligase DTX3 (Dtx3) (Mus musculus (Mouse)).